A 129-amino-acid chain; its full sequence is ALK and LTK ligand 1 (129 aa).

Positions 1 to 27 (MRPLKPGAPLPALFLLALALSPHGAHG) are cleaved as a signal peptide. The interval 24-63 (GAHGRPRGRRGARVTDKEPKPLLFLPAAGAGRTPSGSRSA) is disordered. Residues 25–35 (AHGRPRGRRGA) show a composition bias toward basic residues. 2 disulfides stabilise this stretch: Cys-90–Cys-126 and Cys-104–Cys-113.

It belongs to the ALKAL family. In terms of tissue distribution, widely expressed with highest levels in thyroid and moderate levels in stomach, trachea, small intestine, prostate and brain.

It is found in the secreted. The protein localises to the cell membrane. Cytokine that acts as a physiological ligand for receptor tyrosine kinase LTK, leading to its activation. Monomeric ALKAL1 binds to LTK, leading to LTK homodimerization and activation. In contrast to ALKAL2, does not act as a potent physiological ligand for ALK. The sequence is that of ALK and LTK ligand 1 from Homo sapiens (Human).